Reading from the N-terminus, the 86-residue chain is Anti-adapter protein IraP (86 aa).

The stretch at 1–36 forms a coiled coil; sequence MKNLIAELLFKLAQKEEESKELCAQVEALEIIVTAM.

It belongs to the IraP family. Interacts with RssB.

It localises to the cytoplasm. Inhibits RpoS proteolysis by regulating RssB activity, thereby increasing the stability of the sigma stress factor RpoS especially during phosphate starvation, but also in stationary phase and during nitrogen starvation. Its effect on RpoS stability is due to its interaction with RssB, which probably blocks the interaction of RssB with RpoS, and the consequent delivery of the RssB-RpoS complex to the ClpXP protein degradation pathway. This Shigella sonnei (strain Ss046) protein is Anti-adapter protein IraP.